Reading from the N-terminus, the 707-residue chain is Polyribonucleotide nucleotidyltransferase (707 aa).

Residues Asp-486 and Asp-492 each coordinate Mg(2+). In terms of domain architecture, KH spans 553–612 (PTVTTLRVLPDKIPIIIGPAGKNIKKIIEETKVKIDLDPEGLVKIYATSKEAAEKAVSMI). An S1 motif domain is found at 622–690 (GEVYMGKVTR…DQGRIKVSLK (69 aa)).

Belongs to the polyribonucleotide nucleotidyltransferase family. It depends on Mg(2+) as a cofactor.

The protein resides in the cytoplasm. The enzyme catalyses RNA(n+1) + phosphate = RNA(n) + a ribonucleoside 5'-diphosphate. In terms of biological role, involved in mRNA degradation. Catalyzes the phosphorolysis of single-stranded polyribonucleotides processively in the 3'- to 5'-direction. The polypeptide is Polyribonucleotide nucleotidyltransferase (Sulfurihydrogenibium azorense (strain DSM 15241 / OCM 825 / Az-Fu1)).